Here is a 133-residue protein sequence, read N- to C-terminus: Small ribosomal subunit protein uS9 (133 aa).

The tract at residues methionine 101 to arginine 133 is disordered. Over residues leucine 107–lysine 118 the composition is skewed to basic and acidic residues. The segment covering tyrosine 119–arginine 133 has biased composition (basic residues).

Belongs to the universal ribosomal protein uS9 family.

The protein is Small ribosomal subunit protein uS9 of Deinococcus radiodurans (strain ATCC 13939 / DSM 20539 / JCM 16871 / CCUG 27074 / LMG 4051 / NBRC 15346 / NCIMB 9279 / VKM B-1422 / R1).